Reading from the N-terminus, the 1494-residue chain is Ral GTPase-activating protein subunit beta (1494 aa).

Disordered stretches follow at residues 355-437 (PRSD…APRR) and 709-738 (ENNL…PDSE). Serine 359 carries the phosphoserine modification. Residues threonine 363 and threonine 379 each carry the phosphothreonine modification. 3 stretches are compositionally biased toward polar residues: residues 369–381 (SMPQ…TTPP), 392–428 (NKAT…TSSE), and 711–735 (NLKS…PTTP). Phosphoserine occurs at positions 421 and 720. The residue at position 734 (threonine 734) is a Phosphothreonine. In terms of domain architecture, Rap-GAP spans 1149–1392 (IGYLDLLPCR…TTLEKEVPVI (244 aa)). Phosphoserine is present on serine 1285. A compositionally biased stretch (polar residues) spans 1312 to 1323 (NLNSSQRLSPSS). Positions 1312-1335 (NLNSSQRLSPSSRMRKLPQGRPVP) are disordered.

As to quaternary structure, component of the heterodimeric RalGAP1 complex with RALGAPA1 and of the heterodimeric RalGAP2 complex with RALGAPA2. Heterodimerization is required for activity. In terms of tissue distribution, highly expressed in brain, mostly in amygdala.

In terms of biological role, non-catalytic subunit of the heterodimeric RalGAP1 and RalGAP2 complexes which act as GTPase activators for the Ras-like small GTPases RALA and RALB. The sequence is that of Ral GTPase-activating protein subunit beta (RALGAPB) from Homo sapiens (Human).